Here is an 88-residue protein sequence, read N- to C-terminus: Small ribosomal subunit protein bS16c (88 aa).

It belongs to the bacterial ribosomal protein bS16 family.

The protein resides in the plastid. It localises to the chloroplast. The polypeptide is Small ribosomal subunit protein bS16c (Gossypium hirsutum (Upland cotton)).